The primary structure comprises 318 residues: Porphobilinogen deaminase (318 aa).

The residue at position 241 (C241) is an S-(dipyrrolylmethanemethyl)cysteine.

The protein belongs to the HMBS family. Monomer. Dipyrromethane serves as cofactor.

The catalysed reaction is 4 porphobilinogen + H2O = hydroxymethylbilane + 4 NH4(+). It functions in the pathway porphyrin-containing compound metabolism; protoporphyrin-IX biosynthesis; coproporphyrinogen-III from 5-aminolevulinate: step 2/4. Tetrapolymerization of the monopyrrole PBG into the hydroxymethylbilane pre-uroporphyrinogen in several discrete steps. In Geotalea daltonii (strain DSM 22248 / JCM 15807 / FRC-32) (Geobacter daltonii), this protein is Porphobilinogen deaminase.